Reading from the N-terminus, the 550-residue chain is Mitochondrial distribution and morphology protein 34 (550 aa).

The SMP-LTD domain maps to 1-208 (MAFNFNWSPL…CPEQMSKEDH (208 aa)). Disordered regions lie at residues 294 to 313 (VDKP…LVKS), 358 to 505 (RNAK…ILEQ), and 519 to 550 (VYDE…TAAS). A compositionally biased stretch (low complexity) spans 300 to 310 (SSTTPLTTPSL). Basic residues predominate over residues 364–376 (ANRKKKTRVVNLR). Composition is skewed to polar residues over residues 391–407 (MSDS…TMSD) and 458–467 (AEISQPQVAR). The segment covering 481 to 495 (SENDKRSDSKRRGPR) has biased composition (basic and acidic residues).

It belongs to the MDM34 family. As to quaternary structure, component of the ER-mitochondria encounter structure (ERMES) or MDM complex, composed of MMM1, MDM10, MDM12 and MDM34.

The protein resides in the mitochondrion outer membrane. Its function is as follows. Component of the ERMES/MDM complex, which serves as a molecular tether to connect the endoplasmic reticulum (ER) and mitochondria. Components of this complex are involved in the control of mitochondrial shape and protein biogenesis, and function in nonvesicular lipid trafficking between the ER and mitochondria. MDM34 is required for the interaction of the ER-resident membrane protein MMM1 and the outer mitochondrial membrane-resident beta-barrel protein MDM10. The protein is Mitochondrial distribution and morphology protein 34 of Pyricularia oryzae (strain 70-15 / ATCC MYA-4617 / FGSC 8958) (Rice blast fungus).